Here is a 310-residue protein sequence, read N- to C-terminus: B3 domain-containing transcription factor NGA1 (310 aa).

The interval 1–26 is disordered; the sequence is MMTDLSLTRDEDEEEAKPLAEEEGAR. The span at 16-26 shows a compositional bias: basic and acidic residues; it reads AKPLAEEEGAR. The TF-B3 DNA-binding region spans 35–141; that stretch reads FDKVVTPSDV…RLFIDWRRRP (107 aa). Low complexity predominate over residues 251–268; it reads ESGMTNSTEEESSSSGGS. The interval 251–310 is disordered; it reads ESGMTNSTEEESSSSGGSLPRGGGGGASSSSFFQLRLGSSSEDDHFTKKGKSSLSFDLDQ.

In terms of assembly, interacts with BRX. Interacts with BZIP30.

The protein localises to the nucleus. Regulates lateral organ growth. Functionally redundant with NGA2, NGA3 and NGA4. In Arabidopsis thaliana (Mouse-ear cress), this protein is B3 domain-containing transcription factor NGA1 (NGA1).